The primary structure comprises 605 residues: UPF0313 protein GSU2873 (605 aa).

Residues 291 to 561 (AYEQIRASVT…LQKALLLWHL (271 aa)) enclose the Radical SAM core domain. 3 residues coordinate [4Fe-4S] cluster: C305, C309, and C312. The interval 586–605 (GGAAGGGGGRSGSGFRPGRT) is disordered. Residues 587–597 (GAAGGGGGRSG) show a composition bias toward gly residues.

It belongs to the UPF0313 family. The cofactor is [4Fe-4S] cluster.

The chain is UPF0313 protein GSU2873 from Geobacter sulfurreducens (strain ATCC 51573 / DSM 12127 / PCA).